The following is an 837-amino-acid chain: Periplasmic nitrate reductase (837 aa).

The tat-type signal signal peptide spans Met-1–Ala-32. In terms of domain architecture, 4Fe-4S Mo/W bis-MGD-type spans Leu-44–Asp-100. Residues Cys-51, Cys-54, Cys-58, and Cys-86 each contribute to the [4Fe-4S] cluster site. Mo-bis(molybdopterin guanine dinucleotide) contacts are provided by residues Lys-88, Gln-155, Asn-180, Cys-184, Trp-217–Met-224, Ser-248–His-252, Gln-267–Asp-269, Met-378, Gln-382, Asn-488, Ser-514–Asp-515, Lys-537, Asp-564, and Thr-724–Ser-733. Position 800 (Trp-800) interacts with substrate. Mo-bis(molybdopterin guanine dinucleotide)-binding residues include Asn-808 and Lys-825.

This sequence belongs to the prokaryotic molybdopterin-containing oxidoreductase family. NasA/NapA/NarB subfamily. In terms of assembly, component of the periplasmic nitrate reductase NapAB complex composed of NapA and NapB. [4Fe-4S] cluster serves as cofactor. Mo-bis(molybdopterin guanine dinucleotide) is required as a cofactor. Post-translationally, predicted to be exported by the Tat system. The position of the signal peptide cleavage has not been experimentally proven.

It is found in the periplasm. It catalyses the reaction 2 Fe(II)-[cytochrome] + nitrate + 2 H(+) = 2 Fe(III)-[cytochrome] + nitrite + H2O. Functionally, catalytic subunit of the periplasmic nitrate reductase complex NapAB. Receives electrons from NapB and catalyzes the reduction of nitrate to nitrite. This is Periplasmic nitrate reductase from Bradyrhizobium diazoefficiens (strain JCM 10833 / BCRC 13528 / IAM 13628 / NBRC 14792 / USDA 110).